A 350-amino-acid polypeptide reads, in one-letter code: Ion-translocating oxidoreductase complex subunit D (350 aa).

The next 5 helical transmembrane spans lie at 19–39, 41–61, 67–87, 88–108, and 122–142; these read LMLLVILACLPGFLAQSWFFG, GTLIQILLALVTALGSEALVL, PVKPALLDGSAALTAVLIGLS, LPPLLPWWMLVLGTAFAIIIA, and PAMVAYVLLLVSFPVQMTSWL. FMN phosphoryl threonine is present on Thr186. 4 helical membrane-spanning segments follow: residues 213-233, 242-262, 264-284, and 299-316; these read WGGIGWSWVNLGYLLGGLFLL, IPGAILGSLLLAATLGYLMTP, ATATPMFHLFSGATMLGAFFI, and LVYGVLIGVLVYVIRRFG.

The protein belongs to the NqrB/RnfD family. As to quaternary structure, the complex is composed of six subunits: RnfA, RnfB, RnfC, RnfD, RnfE and RnfG. The cofactor is FMN.

The protein resides in the cell inner membrane. Its function is as follows. Part of a membrane-bound complex that couples electron transfer with translocation of ions across the membrane. This Aeromonas hydrophila subsp. hydrophila (strain ATCC 7966 / DSM 30187 / BCRC 13018 / CCUG 14551 / JCM 1027 / KCTC 2358 / NCIMB 9240 / NCTC 8049) protein is Ion-translocating oxidoreductase complex subunit D.